Reading from the N-terminus, the 199-residue chain is Recombination protein RecR (199 aa).

The segment at 57–72 (CQACRTFTEETLCPIC) adopts a C4-type zinc-finger fold. A Toprim domain is found at 81–176 (EVICVVETPA…SVSRIAHGVP (96 aa)).

Belongs to the RecR family.

Its function is as follows. May play a role in DNA repair. It seems to be involved in an RecBC-independent recombinational process of DNA repair. It may act with RecF and RecO. This is Recombination protein RecR from Shewanella woodyi (strain ATCC 51908 / MS32).